A 332-amino-acid polypeptide reads, in one-letter code: L-lactate dehydrogenase A chain (332 aa).

The residue at position 2 (Ala2) is an N-acetylalanine. Lys5 carries the post-translational modification N6-acetyllysine; alternate. Lys5 is modified (N6-succinyllysine; alternate). Lys14 is subject to N6-acetyllysine. 29–57 (GAVGMACAISILMKDLADEVALVDVMEDK) provides a ligand contact to NAD(+). Lys57 carries the N6-acetyllysine; alternate modification. Residue Lys57 forms a Glycyl lysine isopeptide (Lys-Gly) (interchain with G-Cter in SUMO2); alternate linkage. Residue Lys81 is modified to N6-acetyllysine. Arg106 lines the substrate pocket. The residue at position 118 (Lys118) is an N6-acetyllysine; alternate. Position 118 is an N6-succinyllysine; alternate (Lys118). The residue at position 126 (Lys126) is an N6-acetyllysine. Asn138 contacts NAD(+). Asn138 and Arg169 together coordinate substrate. The active-site Proton acceptor is His193. An N6-acetyllysine mark is found at Lys224 and Lys232. At Tyr239 the chain carries Phosphotyrosine. The residue at position 243 (Lys243) is an N6-acetyllysine. Residue Thr248 coordinates substrate. The residue at position 309 (Thr309) is a Phosphothreonine. Position 318 is an N6-acetyllysine; alternate (Lys318). The residue at position 318 (Lys318) is an N6-succinyllysine; alternate. Thr322 is subject to Phosphothreonine.

The protein belongs to the LDH/MDH superfamily. LDH family. As to quaternary structure, homotetramer. Interacts with PTEN upstream reading frame protein MP31. Post-translationally, ISGylated.

Its subcellular location is the cytoplasm. It catalyses the reaction (S)-lactate + NAD(+) = pyruvate + NADH + H(+). The protein operates within fermentation; pyruvate fermentation to lactate; (S)-lactate from pyruvate: step 1/1. Its function is as follows. Interconverts simultaneously and stereospecifically pyruvate and lactate with concomitant interconversion of NADH and NAD(+). In Bos taurus (Bovine), this protein is L-lactate dehydrogenase A chain (LDHA).